Here is an 874-residue protein sequence, read N- to C-terminus: Probable inorganic carbon transporter subunit DabA (874 aa).

Cys-398, Asp-400, His-580, and Cys-595 together coordinate Zn(2+).

The protein belongs to the inorganic carbon transporter (TC 9.A.2) DabA family. As to quaternary structure, forms a complex with DabB. Requires Zn(2+) as cofactor.

The protein localises to the cell membrane. Part of an energy-coupled inorganic carbon pump. The protein is Probable inorganic carbon transporter subunit DabA of Bacillus cereus (strain ZK / E33L).